Consider the following 573-residue polypeptide: ESX-1 secretion system protein EccA1 (573 aa).

Glycine 334–threonine 341 serves as a coordination point for ATP.

This sequence belongs to the CbxX/CfxQ family. In terms of assembly, part of the ESX-1 / type VII secretion system (T7SS), which is composed of cytosolic and membrane components.

The protein localises to the cytoplasm. Part of the ESX-1 specialized secretion system, which delivers several virulence factors to host cells during infection, including the key virulence factors EsxA (ESAT-6) and EsxB (CFP-10). EccA1 exhibits ATPase activity and may provide energy for the export of ESX-1 substrates. This Mycobacterium tuberculosis (strain CDC 1551 / Oshkosh) protein is ESX-1 secretion system protein EccA1.